We begin with the raw amino-acid sequence, 338 residues long: Ketol-acid reductoisomerase (NADP(+)) (338 aa).

The 181-residue stretch at 1 to 181 (MKVFYDKDAD…GGGRAGIIET (181 aa)) folds into the KARI N-terminal Rossmann domain. NADP(+)-binding positions include 24–27 (YGSQ), Arg47, and Ser52. Residue His107 is part of the active site. Residue Gly133 participates in NADP(+) binding. The KARI C-terminal knotted domain maps to 182–327 (NFREETETDL…SKLRAMMPWI (146 aa)). Asp190, Glu194, Glu226, and Glu230 together coordinate Mg(2+). Substrate is bound at residue Ser251.

This sequence belongs to the ketol-acid reductoisomerase family. It depends on Mg(2+) as a cofactor.

The enzyme catalyses (2R)-2,3-dihydroxy-3-methylbutanoate + NADP(+) = (2S)-2-acetolactate + NADPH + H(+). It carries out the reaction (2R,3R)-2,3-dihydroxy-3-methylpentanoate + NADP(+) = (S)-2-ethyl-2-hydroxy-3-oxobutanoate + NADPH + H(+). The protein operates within amino-acid biosynthesis; L-isoleucine biosynthesis; L-isoleucine from 2-oxobutanoate: step 2/4. Its pathway is amino-acid biosynthesis; L-valine biosynthesis; L-valine from pyruvate: step 2/4. Functionally, involved in the biosynthesis of branched-chain amino acids (BCAA). Catalyzes an alkyl-migration followed by a ketol-acid reduction of (S)-2-acetolactate (S2AL) to yield (R)-2,3-dihydroxy-isovalerate. In the isomerase reaction, S2AL is rearranged via a Mg-dependent methyl migration to produce 3-hydroxy-3-methyl-2-ketobutyrate (HMKB). In the reductase reaction, this 2-ketoacid undergoes a metal-dependent reduction by NADPH to yield (R)-2,3-dihydroxy-isovalerate. This chain is Ketol-acid reductoisomerase (NADP(+)), found in Paraburkholderia xenovorans (strain LB400).